The sequence spans 406 residues: 5-cytosine rRNA methyltransferase NSUN4 (406 aa).

Glycine 207, glycine 208, lysine 209, aspartate 226, arginine 231, aspartate 259, glycine 260, and aspartate 277 together coordinate S-adenosyl-L-methionine. Cysteine 332 serves as the catalytic Nucleophile.

Belongs to the class I-like SAM-binding methyltransferase superfamily. RsmB/NOP family.

It localises to the mitochondrion. The catalysed reaction is a cytidine in rRNA + S-adenosyl-L-methionine = a 5-methylcytidine in rRNA + S-adenosyl-L-homocysteine + H(+). It catalyses the reaction a cytidine in mRNA + S-adenosyl-L-methionine = a 5-methylcytidine in mRNA + S-adenosyl-L-homocysteine + H(+). Functionally, mitochondrial RNA cytosine C(5)-methyltransferase that methylates cytosine to 5-methylcytosine (m5C) in various RNAs, such as rRNAs, mRNAs and some long non-coding RNAs (lncRNAs). Involved in mitochondrial ribosome small subunit (SSU) maturation by catalyzing methylation of mitochondrial 12S rRNA. The protein is 5-cytosine rRNA methyltransferase NSUN4 (nsun4) of Xenopus laevis (African clawed frog).